Consider the following 201-residue polypeptide: Large ribosomal subunit protein bL12m (201 aa).

The N-terminal 38 residues, 1–38 (MLPVAASRCLWGPRLGLRGAALRLARQQMPSVCAARQL), are a transit peptide targeting the mitochondrion. 2 disordered regions span residues 37–60 (QLRSSSHRRSEALAGAPLDNAPKE) and 109–130 (VSAAAPASEAAEEEDVPKQKER). 4 positions are modified to N6-acetyllysine: Lys-128, Lys-141, Lys-145, and Lys-147. An N6-acetyllysine; alternate modification is found at Lys-153. N6-succinyllysine; alternate is present on Lys-153. Lys-153 is covalently cross-linked (Glycyl lysine isopeptide (Lys-Gly) (interchain with G-Cter in ubiquitin)). Lys-165 carries the N6-succinyllysine modification. Lys-166 and Lys-176 each carry N6-acetyllysine. N6-acetyllysine; alternate is present on Lys-181. Lys-181 is subject to N6-succinyllysine; alternate. Lys-188 carries the N6-acetyllysine modification.

This sequence belongs to the bacterial ribosomal protein bL12 family. As to quaternary structure, component of the mitochondrial ribosome large subunit (39S) which comprises a 16S rRNA and about 50 distinct proteins. Interacts with NOA1. Two mature forms are produced by differential two-step proteolytic cleavage. Cleaved by the mitochondrial processing protease to produce the long mature form and subsequently by the mitochondrial intermediate protease to produce the short mature form. In terms of processing, in the presence of CUL3, undergoes 'Lys-63'-linked ubiquitination at Lys-153 which results in proteasomal degradation.

Its subcellular location is the mitochondrion matrix. In terms of biological role, as a component of the mitochondrial large ribosomal subunit, plays a role in mitochondrial translation. When present in mitochondria as a free protein not associated with the ribosome, associates with mitochondrial RNA polymerase POLRMT to activate transcription. Required for POLRMT stability. The chain is Large ribosomal subunit protein bL12m (Mrpl12) from Mus musculus (Mouse).